Here is a 299-residue protein sequence, read N- to C-terminus: Taste receptor type 2 member 5 (299 aa).

Position 1 (Met-1) is a topological domain, extracellular. A helical transmembrane segment spans residues 2-22; sequence LSAGLGLLMLVAVVEFLIGLI. The Cytoplasmic portion of the chain corresponds to 23–45; it reads GNGVLVVWSFREWIRKFSWSSYN. Residues 46–66 form a helical membrane-spanning segment; sequence LIILGLAGCRFVLQWLIILDL. At 67 to 82 the chain is on the extracellular side; that stretch reads SLFPLFQSSRWLRYLS. Residues 83–103 form a helical membrane-spanning segment; the sequence is IFWVLVSQASLWFATFLSVFY. The Cytoplasmic segment spans residues 104 to 127; it reads CKKITTFDHPAYLWLKQRAYNLSL. Residues 128 to 148 traverse the membrane as a helical segment; the sequence is WCLLGYFIINLLLTVQIGLMF. Over 149–175 the chain is Extracellular; the sequence is YHPPQGNSSIRYPFESWQYLYAFRLNS. Asn-155 carries an N-linked (GlcNAc...) asparagine glycan. Residues 176-196 form a helical membrane-spanning segment; sequence GSYLPLMVFLVSSGMLIVSLY. At 197–223 the chain is on the cytoplasmic side; the sequence is THHKKMKVHSAGRRDVRAKAHITALKS. The chain crosses the membrane as a helical span at residues 224-244; the sequence is LGCFLLLHLVYIMASPFSIAS. At 245–253 the chain is on the extracellular side; it reads KTYPPDLTS. The chain crosses the membrane as a helical span at residues 254–274; sequence VFIWETLMAAYPSLHSLILIM. Residues 275 to 299 lie on the Cytoplasmic side of the membrane; sequence GIPRVKQTCQKILWKTVCARRCWGP.

It belongs to the G-protein coupled receptor T2R family.

It is found in the membrane. Receptor that may play a role in the perception of bitterness and is gustducin-linked. May play a role in sensing the chemical composition of the gastrointestinal content. The activity of this receptor may stimulate alpha gustducin, mediate PLC-beta-2 activation and lead to the gating of TRPM5. In Pan paniscus (Pygmy chimpanzee), this protein is Taste receptor type 2 member 5 (TAS2R5).